The chain runs to 759 residues: TSK-associating protein 1 (759 aa).

An N-terminal signal peptide occupies residues 1–29 (MEIYTMKTNFLVLALSLCILLSSFHEVSC). The disordered stretch occupies residues 55 to 74 (GKDDEDQSAKIQSENQNNTT). The span at 63-74 (AKIQSENQNNTT) shows a compositional bias: polar residues. EFE repeat repeat units lie at residues 91–138 (VGSV…DEEL), 139–176 (SAHRQKMLEEIEHEFEAASDSLKQLKTDDVNEGNDEEH), 177–215 (SAKRQSLLEEIEREFEAATKELEQLKVNDFTGDKDDEEH), 216–254 (SAKRKSMLEAIEREFEAAMEGIEALKVSDSTGSGDDEEQ), 255–293 (SAKRLSMLEEIEREFEAASKGLEQLRASDSTADNNEEEH), 294–329 (AAKGQSLLEEIEREFEAATESLKQLQVDDSTEDKEH), 330–368 (FTAAKRQSLLEEIEREFEAATKDLKQLNDFTEGSADDEQ), 369–407 (SAKRNKMLEDIEREFEAATIGLEQLKANDFSEGNNNEEQ), 408–443 (SAKRKSMLEEIEREFEAAIGGLKQIKVDDSRNLEEE), and 444–473 (SAKRKIILEEMEREFEEAHSGINAKADKEE). The tract at residues 91-473 (VGSVSDESVG…GINAKADKEE (383 aa)) is 10 X approximate EFE repeat. Coiled coils occupy residues 142–461 (RQKM…FEEA) and 685–734 (IKKL…AKDE). Disordered stretches follow at residues 154-184 (EAASDSLKQLKTDDVNEGNDEEHSAKRQSLL), 200-219 (QLKVNDFTGDKDDEEHSAKR), 271-332 (AASK…HFTA), and 393-414 (LKANDFSEGNNNEEQSAKRKSM).

As to quaternary structure, homomultimer. Interacts (via C-terminal domain) with GIP1, CSN1 (via N-terminal domain) and TSK (via TPR repeats). In terms of processing, binds calcium through the EFE repeats. In terms of tissue distribution, expressed preferentially in flowers and shoot apex.

Its subcellular location is the endoplasmic reticulum lumen. It is found in the nucleus envelope. The protein localises to the cytoplasm. Functionally, involved in seedling development in the dark. May be involved, when interacting with TSK, in the organization of spindle microtubules and may participate, when interacting with GIP1, in structural links between the nuclear envelope and the cytoskeleton. This chain is TSK-associating protein 1 (TSA1), found in Arabidopsis thaliana (Mouse-ear cress).